Consider the following 160-residue polypeptide: MHSSLKTMAPAKLERLCVLSFFLFCATVFGTESLESLPEDKLILRGLKFYGFHGVLPEERELGGLFIVDINLWLSLKKAIESDNLADTVSFADTFRLVKKIVEGPPRNLYETVADDIASEMLETFPKINVIRVKFGKPNPSLVNSTVDFLGAELFRKRNH.

Residues Glu59, Phe91, and 110–111 (YE) each bind substrate. Lys137 serves as the catalytic Proton donor/acceptor.

This sequence belongs to the DHNA family. As to quaternary structure, homooctamer. Forms a hollow cylinder assembled from two ring-shaped tetramers. In terms of tissue distribution, expressed at very low levels in siliques.

It carries out the reaction 7,8-dihydroneopterin = 6-hydroxymethyl-7,8-dihydropterin + glycolaldehyde. It participates in cofactor biosynthesis; tetrahydrofolate biosynthesis; 2-amino-4-hydroxy-6-hydroxymethyl-7,8-dihydropteridine diphosphate from 7,8-dihydroneopterin triphosphate: step 3/4. Its function is as follows. Catalyzes the conversion of 7,8-dihydroneopterin into 6-hydroxymethyl-7,8-dihydropterin, a biosynthetic precursor of the vitamin tetrahydrofolate. Can use L-threo-dihydroneopterin and D-erythro-dihydroneopterin as substrates for the formation of 6-hydroxymethyldihydropterin, but it can also catalyze the epimerization of carbon 2' of dihydroneopterin and dihydromonapterin. This Arabidopsis thaliana (Mouse-ear cress) protein is Probable dihydroneopterin aldolase 3.